A 111-amino-acid polypeptide reads, in one-letter code: Movement protein TGB2 (111 aa).

Topologically, residues 1-16 (MSSHQNFLTPPPDHSK) are cytoplasmic. Residues 17 to 37 (AILAVAVGVGLAIVLHFSLSY) form a helical membrane-spanning segment. The Lumenal segment spans residues 38 to 72 (KLPSPGDNIHSLPFGGTYRDGTKSIIYNSPHRGPG). The helical transmembrane segment at 73 to 93 (QSGALPIITVFAIIECTLHVL) threads the bilayer. Topologically, residues 94–111 (RKRDNPVRPQHSDCPNCS) are cytoplasmic.

The protein belongs to the Tymovirales TGBp2 protein family.

It is found in the host endoplasmic reticulum membrane. Its function is as follows. Plays a role in viral cell-to-cell propagation, by facilitating genome transport to neighboring plant cells through plasmosdesmata,. This Carica papaya (Papaya) protein is Movement protein TGB2.